Here is a 186-residue protein sequence, read N- to C-terminus: Probable GTP-binding protein EngB (186 aa).

Positions 18-186 (DKKEICFIGR…LKKLIGSVIL (169 aa)) constitute an EngB-type G domain. Residues 26–33 (GRSNVGKS), 52–56 (GRTQL), 69–72 (DLPG), 135–138 (NKAD), and 166–168 (VSA) contribute to the GTP site. Mg(2+) contacts are provided by S33 and T54.

The protein belongs to the TRAFAC class TrmE-Era-EngA-EngB-Septin-like GTPase superfamily. EngB GTPase family. The cofactor is Mg(2+).

Necessary for normal cell division and for the maintenance of normal septation. This Malacoplasma penetrans (strain HF-2) (Mycoplasma penetrans) protein is Probable GTP-binding protein EngB.